Here is an 8922-residue protein sequence, read N- to C-terminus: MSSWFSYFGFSKGPPLEEVREESEEDAQVPEQVVSKNTEEEIADAINRLSPEQQNLIQDVLRRAESSRKEAKVVVDAEMMRSRFRQRDSIEDSQEIDHRYSLIQMDSIPENMVTNEMEERLATTQNEDIIPESSQRSPITPRKIHEKRASITEVTTENLRHRFQKMKSHLTTWFNSLDYDGEYIFDFTSKPEKSEKLGELTMQYIDALSQAIMISSHIEYSHHVLSSNPKFQQMCTQFCESIFSVAFDELTYQLLDDKVQETLNEYCGQIAEEALQAAFFTMISKTLSKSKECEQVLNEISSMHKSRSFESAKQLDQLLSRIEDDRESSRKSSPYLYEVLGKSSDSPSTSASVEYRSQNSYESEISFETPDIHVEELFDTHLNEKDETKLILKSVEDKLETTEIEGNVPKIDENLIENIQYDSGDQEHYIWISGPLGRINEEHEDDFEARSESSSGSMITHSTEPKMQLNVEEYIQTMIARVSTENEITNTSNQTANIVIDPGSIDSEEINKLAAKLVEESILKASQEAASDNHEKERSSATSKADYERSFDQDVTYERSSPLLEPSEEPVMESKEPELTQEEIDHIARIQSLAEQSSFEQASTIPDRPPLPARLPTVDEPIVISEQHEEDRSSATSGADYERSFDQEVTYERSSPLLEPCEEPVMESKEPELTQEEIDHIARIQSLAEKSSFEQASTIPDRPPLPARLPTVDEPIVISEQHEEDRSSATSGADYERSFDQDVTYEKSSPLLEPSEDPVMESKEPELTQEEIDHIARIQSLAEKSSFEQTSTIPDRPPLPARLPTVDEPIVSSEQHEEDRSSATSGADYERSFDQDVTYERSSPLLEPCEEPVMESKEPELTQEEIDNIAWIQSIAEQSSFEQASTIPDRPPLPVRLPTVDEPIVSSEQQEEDRSSATSGADYERSFDQDVTYERSSPLLEPSEDPVMESKEPELTQEEIDHIAWIQSIAEQSSFEQASTVPDRPPLPVRLPTVDEPIVSSEQHEDDRSSATSGADYERSFDQDVTYERSSPLLEPCEEPVMESKEPELTQEEIDHIAWIQSSAEQSSFEQASTVPDRPPLPVRLPTVDEPIVSSEQHEEDRSSATSGADYERSFDQDATYERSSPLLEPCEEPVMESRVPELTQEEIDHIARIQSLAEKSSFEQTSTIPDRPPLPARLPTVDEPIVSSEQHEEDRSSATSGADYERSSDQEVTYERSSPLLEPCEEPVMESKEPELTQEEIDHIAWIQSIAEQSSFEQASTVPDRPPLPVRLPTVDEPIVSSEQHEDDRSSATSGADYERSFDQDVTYERSSPLLEPCEEPVMESKEPELTQEEIDHIAWIQSIAEQSSFEQASTVPDRPPLPVRLPTVDEPIVSSEQHEDDRSSATSGDDYERPFDQDFTYERSSPLLEPCEEPVMESRVPELTQEEIDHIAWIQSIAEQSSFEQASTIPDRPPLPVRLPTVDEPIVSSEQHEDDRSSATSGADYERSSDQEVTYERSSPLLEPCEEPVMESKKPELTQEEIDHIAWIQSIAEQSSFEQASTIPDRPPLPVRLPTVDEPIVSSEQHEDDRSSATSGADYERSFDQDVTYERSSPLLEPSEDPVMESKEPELTQEEIDHIAWIQSIAEQSSFEQASTIPDRPPLPVQLPTVDEPIVSSEQQEEDRSSATSGADYERSFDQDVTYERSSPLLEPSEDPVMESKEPELTQEEIDHIAWIQSIAEQSSFEQASKIPDRPPLPVRLPTVDEPIVSSEQHEEDRSSATSGADYERSFDQDVTYERSSPLLEPSEEPVMESRVPELTQEEIDHIAWIQSIAEQSSFEQASTIPDRPPLPVRLPTVDEPIVSSEQHEEDRSSATSGADYERSSDQEVTYERSSPLLEPCEEPVMESKEPELTQEEIDHIAWIQSIAEQSSFEQASTIPDRPPLPVRLPTVDEPIVISEQHEEDRSSATSGADYERSFDQDVTYERSSPLLIPSEDPVMESKESELTQEEIDHIARIQSLAEQSLFEQASTIPDRPPLPVRLPTVDEPIVISEQHEGDRSSATSGADYERSFDQDVMYERSSPLLIPSEDPVMESKESELTQEEIDHIARIQSLAEQSSFEQASTIPDRPPLPVRLPTVDEPIVISEQHEGDRSSATSGADYERSFDQDVTYERSSPLLEPCDEPVMESKEPELTQEEIDHIARIQNLAEQSSFEQASTITDRPPLPVRLPTVDEPIVISEQHEGDRSSATPGADYERSYDQDVTYERSSPLLEPSEVPVMVSKAAVLTQEEIDHIAIMQSLAETEDRKALLEPCEEPVMESKKPELTQEEIDHIAWIQSIAEQSSFEQASTIPDRPPLPVRLPTVDEPIVSSEQHEDDRSSATSGADYERSIDQEVTYERSSPLLEPCEEPVMESKKPELTQEEIDHIAWIQSIAEQSSFEQASTIPDRPPLPVRLPTVDEPIVSSEQHEEDRSSATSGADYERSSDQEVTYDRSSPLLEPCEEPVMESKPELTQEEIDHIAWIQSIAEQSSFEQASTIPDRPPLPVRLPTVDEPIVSSEQHEEDRSSATSGADYERSFDQDVTYERSSPLLEPSEDPVMESKEPELTQEEIDHIAWIQSIAEQSSFEQASTIPDRPPLPVRLPTVDEPIVSSEQHEDDRSSATSGTDYERSFDQDVTYERSSPLLEPCEDPVMESKEPELTQEEIDHIAWIQSIAEQSSFEQASTIPDRPPLPVRLPTVDEPIVSSEQHEDDRSSATSGADYERSFDQDVTYERSSPLLEPSEDPVMESKEPELTQEEIDHIARIQSLAEQSSFEQASTVPDRPPLPVRLPTVDEPIVSSEQHEDDRSSATSGADYERPFDQDFTYERSSPLLEPCEEPVMESKKPELTQEEIDHIAWIQSIAEQSSFEQASTIPDRPPLPVRLPTVDEPIVSSEQHEEDRSSATSGADYERSFDQDVTYERSSPLLEPYEEPVMESKVPELTQEEIDHIARIQSLAEQSSFEQAPTIPDRPPLPVRLPTVDEPIVISEQHEGDRSSATSGADYERSFDQDVTYERSSPLLIPSEDPGNPSEPAPTPEEIHHTACDPSIAAPSSSFEQASTVPDRPPLPVRLPTVDEPIVSSEQHEDDRSSATSGADYERSFDQDVTYERSSPLLEPCEEPVMESKEPELTQEEIDHIAWIQSIAEQSSFEQASTVPDRPPLPVRLPTVDEPIVSSEQHEDDRSSATSGADYERSFDQDVTYERSSPLLEPCEEPVMESKEPELTQEEIDHIAWIQSIAEQSSFEQASTIPDRPPLPVRLPTVDEPIVSSEQHEDDRSSATSGTDYERSFDQDVTYERSSPLLEPSEEPVMLSKEAELTQEEIDHIAIIQSLAEKSSFEQFGIQTGHPFLPVRILTERQNDHDRISEEDNTSSCSSENNIILKYSDISYDRNTPLLNSDDEFLEKDFGASAESSEPSQGNWAKFEEISSSSNAEWPTNISTYKFPSFSEKNVNEDLLNKSSWDCRDNVIVDDVIEEEDENDLLGDVTYSREVNKDYWKDSSTIPLVRIECVSDEQINVNEETPGIDKEIKSAEISKDDNSVVSCSSENQIDHTNDEHFDFGQEDSEHEELKHCSSQYSFDSSLPPFHRYVACPSITPSEGDDGGSSETGHPTTDECYNEDVNRQIEQYSALASLSKSVLPVVEIKIDEATSESSVLQLDDDDKSISEQEDFIDNMDLTLKRNEDKTNITNLGASEIQQQEENEISAQTAEVESSDSWNSKTVKMLSDDSAFAEETQHVDLVSTSATKHEDYAEEQTLSQEEIDHIARITAMATEDNTDLQTLPTPQVRQNEPELSQKEIDHITRIAAMANKDFGMYPSIVSEHPAPVESELTQEELDHIARITEIASMDISTLPPPTGKPSETSLTQEELDHIARIAEMASAEYDVPVKIFEPPELTQEELDHIAKITAMAAQDVQLPATQRSITHKVSLTPPPPPPSKHFEQDLTQEELDHIARIAEMADMDYNTPFTAEPVQDEEEEPITESGSDATSGADIFDEQEDASSDREKRSGTSFPDNAETSLEDDTAHEKSYPQLEPSEEPVMKSKEPELTQEEIDHFARIQSLAEQSSFEQASTIPDRQPLPVRLPTVDEPIVISEQHEGDRSSATSGADYERSFDQDVTYERSSPLLEPCDEPVMESKEPELTQEEIDHIARIQSLAEQSSFEQTSTIPDRQPLPVRHPTVDEPIVISGQHEEDRSSATSGADYQQSFDQDDPSKRSSPLLEPNEEQMMESTQPELTQDHSSTTISDILIKEVDKFIPEAKFGRSFEEHDGRLIHSGNLDIDVPLESDCRKTFGQDKSESTMPTELTEADLERVARIHQHFDQSSFDEVVVPTSHPDDGRSSSVRSSEYLDTVTPLSSCAATPILTNPKLVQEELDHIAFIQKMAEQFTFDEVETPILRQNTTSHSVSYNFVQRSCHEDVSFQKKESPALTSLKEIAESSQLTQEELDHIASIQQMADQPYFEESHFIFKSDVKEEKKEDKLHHELFVEECVAQESITQDDVERKPLELTQEEIDHIAKIQKLADQSSFEQASAIQSLPTAEEPIVEKREDDKSNITSGADYQQSFDQDVTYKRSSPLLEPSEEPVMESKEPELTQEEIDHIARIQSLAEQSSFEQASTIPDRPPLPVRLPTVDEPIVISEQHEGDISSATSGADYERSLDQDVTYERSSPLLEPCDEPVMESKEPELTQEEIDHIARIQSLAEQSSFEQASTIPDRPPLPVRLPTVDEPIVSSEQHEEDRSSATSGADIERSFDIDVSQDRVSPISEHEEGVTQEEMEHIARIAAMAAEDFKHPEGNLEPEFSQPDKDHIAMMKKLEEQSKMENQELPANPIIHTDQVDRQESEGSSSATSGADIPSSFDISSPIPPEPLQDHITTSQKLISRPSIEISNVPSRLPELSLTAVQRGSEDISSATSGAGIERSFDGISPLPNFSEEPIMINDEMNYVLMVTHMAQKIDVQQPIQETSTLRKAVLCESPEDFSEATSGADTESISETTANKKDSNDSNGLTEEEMKHIAEVLRKAEASSAASGMFERDSNLPPLRRTSITYTSHFSPSVIRDLRSSTSFTSVPAASDEEEIVKGKLKREPSTQVVYTDHFLRDLQSINAYLEKGEDGTDVTIEETSHDNESSSLPEEDEHITDVYHFDVGTSLLVQQYILQQSTFQEAAGLHISPIRRTMSAACTAEKHIDDEENIKEREVKHAQSHDQIKKRAGGEPNAYELLEQHSFRHTQPLLCNVDFLWRLNFAANRMTEEIADEAGRELRAHYRNVANPRARYFSDAYDIGTDDEEEEVTETSQAGFSVEPMRHEEQSYGLFSFFTSSKRSVSDRPRSALAMFTNPSPSASPSLLRKESEDRGDILNLLRRSSGADSRASNDSSASRLPDTALVGLSEAEKQHIMSVMSRSNRNTSPMTSRRCSSALQMLPEVDNLSEAEKEHIQTILEKAESKTPFMIKVPMKKQISSRTESTNSRVSSEGIDEEVENEVQRKKTIEEPIVEIPSRAVTPRNNLRVIPPPIAISHPTPPHSAKTDTGSRHSSGSSAHSQFGFSTPSISGFKIFFDKAKTATETLVKEIKDEVIVEVDKDKTETKPEPNVSNELTAEEFEHIRRINEMAGIDEPIQPPPIAQERRKSSVVSGLKNMFGVGKHDESELTTEEKEHIRQMSLMAEKMDEEILDEQSKPKSTFGLKNFFGKATQSVMHATDSVIKNVQNQSKQSLSGLTQEELDNIAQATESAQQESKQELTQDEIDHIARINAMAAEDFEQPAVNMNQGLSQAEKDHIARIEAMAADDSQSKIIVPPPSIIQKDIELSMEEMDHIARIAAMADEDFTHPVKGAVAPIYDENYSRDDGAIDRFPASTATPVFAQPSEIELSEEEREHISRIAAMAEEDFNTPYVSTHPTQQIEIELTEEEKEHIARIEAMASEDLNAPSPFIQQEQRVATMPVPINYHVEEPTLSQEEIDHIARITAMATEDNTDLQTLPTPQVKQNEPELSQEEIDHITRIAAMANEDFGMYPSIVSEHPAPVESELTQEELDHIAKITGMASMDISTLPPPTGKPSETSLTQEELDHIARIAEMASAEYDVPVKIFEPPELTQEELDHIAKITAMAAQDVQLPATQRSITHKVSLTPPPPPPSKHFEQDLTQEELDHIARIAEMADMDYNTPFTAEPVQDEEEEPITESGSDATSGADIFDEQEDASSGASGSFDNNNAQVLTSGFSPDRVTSPAALDTTEEPQGPIMAQKTVSPTPSADSMASRKSSEYDIRSISEIRQESESDIGKWYEEQLSFMRQSIHDEEEDVGHEIRTDVEEFPLEYVEDQLHFLEGIDVESQHHEPTTSSAFFGTGRSIGEGEKRKYGDDAVEQQKLENYEEEEKTKSSSREAFDDGFETQREESLRAQQTPIDSLPGSRMLKRPNFGFLSNIANDAINKAKEAGSQIQAAVPIKPSSSSSNIVNNNVFSSSKSSTSLGTSAPTKSIPSPQIGIPMDGLSEEERRQIMSVMAAADFDDSVNNVKPSTSGSSNIPAGMEDLSEAEREKIMSVMANAEMEMGARFPPPSSQIPTRSPSVMSSSIMSELPPGLDDLSDDERMKIMAVMAEADMQNVRKPIARGPPPMPPSTSMIPPGMEGLSEEERQKIMSVMANAETDSSSSVITSRQPSRSPSVARMQPQLMPPQQAIPIIPPGLEGLSDEERHTIMSVMAEAEFEESRSQVPSRQPSRSPSFVNPQQSFHPIPSFEPIVPPGLEDLSEEERQKIMSVMMNAEVEESRSQLPSRQPSRSPSVAMIQAPAVPIIPSGMEDLPEAERQKIMSVMAEAEIQNFVPSRSPSNYSMQPVPVIPHGLEDLSEAERQKILSVMAEAEIDSAKIPSRSTSSYSMPPPLPQMSQPEITTGLEHSSEADMEFGRDSSRSHQVIPPGLENLSEEERQQIMSVMAHAELESIIPSGHIDQPISLPRGHTGFKPAGIVNEDELFETERKQREESPTRESGYATSTSYERELAMGDEERMDGLLEDIIRIREGARSRRDSRDEVLHRREEDPEVHTPEESSTAVVTDVPSVSPVTENVPEKQTDDFDFTYSDSRFAEIVQMQEEEEAGSLQKQKVDEKPRMWETVFDGDESELPHQDFVFNEPTTKKTSDFDFPKETDEVFEKPSEIQRIRVTKNHDVDMDEIYDNVIATEAPSSVSQRRQPVDSETSVKSRTIQRGPTKPPPMIKITVEEETKSDSDEESCSEDDEEYPDRVVAAPTAPAPTFEEVENERIRQEELGKEVLQQIMAFGEVANDEFDVQWAKTTTSQTPSTSTKPTVTAPKRSDPIPIAPSQRSKEIEEERIRTEALEEEEFYRHGHNPFLESPEEDEVSINMEDVEYAEIARLYESANQTMRRPGPVYTITEDESEDDGTLSNSESRLVAREKRLMDKKTADSLMAKYQKMKKVQAKQTTTASSTSVTATPAYAIINFSDLKTSTRTTDSNSYFETTKNIPALEIKDPKKDIPPEISASIDKTMAEVDALLGQVYTNEKAIPNLLCFDQSNFSNHPPTSSASTSTADDLILLKNNNSSSPSFLLPLQSSVLGSQLDSVRDDNERNENETTSPRGLKRSPGMLLPSPTSTSIFPMPPTAAESVGAAIGATTASMFGGISVADPPPTMDGLTNSYKWLQNIEDDGNLANNDMGRRKLPSIPPNSSAFPPPTSVTTNVISTDTSMPSTSSGPAPTYVDDYNVTLPSDPIVAESLLKGGSLTRRHQHQQQHQAPVYITSSASRPPSAAGSNIFQESRPTSSLSMYQNDVILSRPGSAASNYTTASTINPTILAGASYSSKASSHIRQPVSVRSPRAQTGTTQTTAASGSASNSIRPSIGSSSVTTRVPNTLARVLLKKELKDVLIQRKQRLEATEIEANQRHYKVQKMLITGLLPEKPEDDIPNIVKCDLPADLVRGVHISMQPPSPAVSAFSPRRYHHPTSVASHQSHPSTFKHMSKSIACQADELPPVKPMISLRTQLDMERRPQLMTYVGKRSAETQTELANYESITPTVRYGSIPRSSRERTASRRYREQQQQIYNQMPQNHNDLLEITKKYFEDYDRQLREFGERARRHSRRRFDFHDDDDQDDMRKNQVMHELARRKERMCASCEILSTTDPIRTALNPNVPMSSDYSSHVPHYGSLPRIDYPRGTRSDVRDFTYRQQHLPQQPPTNYSYNYGSLPRNFERGFSDLPPIEIENEQSFGAPPRHRSNLGYESTSMFNLSDPVYLGYDSIPMVQHQQPRVYDQIPSGYAQDTTNLNSLNQGVRGSDMVSQYASYLNSQFQSGLQQSAQLPQPMIPITRYDAPMSDPYVSSRSRLVDQMNQGYNSNQYHHHSTLLAPKSAQMTHIAPTYNQLAQQQGIPMQNTQMDPLMMSSGRIPSSSSQVYSRNEMNYGSRPAQSSLFEYGNRRQYGAAPPPTYDVPNVSSASDWRTTQQQGLIQQMPMQMQQQQHNTFDARWPKEDALSRMYATASRRRAQETALTSSNKISTGSRSYARRPIRPSSYRNPEATNSMPDRHVARRTAENSRYDVKRILLTRSYKHHNIYNDLGVRVVGGKRQMNGELSAYVSQLHSTANNQTLGQIKIGDEVVEWNGILLRGKTFEEVERIVNKSHGEIEMVIRTYKNPSSGVYDTLPLNRNTMRDDLSPDRVPPVPMHRINGINNNSVLHHHTLSDSSCHGHIQVSLGYDGNSRLVAKIIRARGLKSRDQSRSAPNPFVKVYLLPGRKVSHKRRTRFVDSSCAPEWNQVLEYQVAPHTLNTMFLEFTVCDYQRDVDDLPLGNVQIPLADKSAINTGPRWYPLQGSYDQPIPQHYMNGTSLSQIPSIAAASKHSAAVHNHHNHNYSEVPPSILYPKGGVGTRHPDKPVRHATFNYNPVSLDIGYPAIN.

The segment at 11–35 is disordered; it reads SKGPPLEEVREESEEDAQVPEQVVS. A compositionally biased stretch (acidic residues) spans 19–28; that stretch reads VREESEEDAQ. The stretch at 385 to 405 forms a coiled coil; the sequence is KDETKLILKSVEDKLETTEIE. Disordered regions lie at residues 527–579, 622–673, 687–860, 880–955, 971–1049, 1062–1139, 1151–1331, 1347–1420, 1444–1520, 1538–1619, 1632–1710, 1726–1801, 1820–1898, 1939–1992, 2032–2084, 2126–2175, 2194–2213, 2220–2246, 2329–2403, 2423–2497, 2516–2594, 2610–2684, 2704–2845, 2892–2963, 2983–3155, 3171–3249, 3268–3337, 3619–3639, 3995–4079, 4117–4169, 4181–4271, 4557–4624, 4636–4656, 4666–4685, 4730–4801, 4855–4899, 5004–5036, 5360–5379, 5390–5413, 5484–5511, 5540–5572, 6194–6303, 6354–6437, 6487–6510, 6577–6609, 6668–6691, 6728–6768, 6998–7018, 7045–7098, 7137–7175, 7202–7263, 7313–7350, 7598–7623, 7760–7797, and 7842–7881; these read QEAA…EPEL, IVIS…EPEL, LAEK…KEPE, SFEQ…EPEL, EQSS…EPEL, SSAE…MESR, IARI…EPEL, EQSS…VMES, SFEQ…PELT, SFEQ…EEID, SFEQ…LTQE, SFEQ…VPEL, VISE…LTQE, IVIS…SELT, IVIS…SKEP, QSSF…PVRL, IVIS…YDQD, SFEQ…KKPE, SFEQ…KPEL, SFEQ…KEPE, SFEQ…ERPF, SFEQ…MESK, SFEQ…PVML, SITP…PTTD, AEPV…QEEI, IVIS…PELT, SLAE…STTI, QASA…TQEE, EQSS…PVRL, SEQH…YERS, EQSS…GVTQ, PANP…PLQD, PEDF…NGLT, LAMF…RKES, RRSS…DTAL, KKQI…ENEV, PPIA…SQFG, AEPV…ESES, DVES…GSRM, SSKS…QIGI, ARFP…LDDL, NAET…SVAR, AEFE…VPPG, TERK…TSTS, ARSR…DDFD, FDGD…FEKP, EAPS…YPDR, KTTT…EIEE, DSVR…SPGM, TRRH…SRPT, and HIRQ…SSSV. Residues 531 to 552 show a composition bias toward basic and acidic residues; the sequence is SDNHEKERSSATSKADYERSFD. Residues 760–776 are compositionally biased toward basic and acidic residues; it reads MESKEPELTQEEIDHIA. A compositionally biased stretch (low complexity) spans 1062–1076; sequence SSAEQSSFEQASTVP. Over residues 1230 to 1244 the composition is skewed to basic and acidic residues; it reads MESKEPELTQEEIDH. The span at 1251 to 1261 shows a compositional bias: polar residues; that stretch reads IAEQSSFEQAS. 2 stretches are compositionally biased toward basic and acidic residues: residues 1606–1619 and 1700–1710; these read MESK…EEID and MESKEPELTQE. 2 stretches are compositionally biased toward basic and acidic residues: residues 1888-1898 and 1982-1992; these read MESKEPELTQE and MESKESELTQE. Positions 2194-2204 are enriched in polar residues; sequence QSSFEQASTIT. Basic and acidic residues predominate over residues 2584–2594; that stretch reads MESKEPELTQE. Residues 2772-2788 are compositionally biased toward basic and acidic residues; that stretch reads MESKEPELTQEEIDHIA. Polar residues predominate over residues 2793 to 2803; it reads LAEQSSFEQAS. The segment covering 3076–3085 has biased composition (polar residues); it reads APSSSFEQAS. Positions 4035 to 4044 are enriched in polar residues; that stretch reads GTSFPDNAET. Positions 4065-4079 are enriched in basic and acidic residues; sequence PVMKSKEPELTQEEI. 3 stretches are compositionally biased toward polar residues: residues 4182–4195, 4223–4234, and 4255–4271; these read LAEQ…STIP, SATSGADYQQSF, and MEST…STTI. Residues 4571-4580 show a composition bias toward basic and acidic residues; it reads IVEKREDDKS. Over residues 4581-4594 the composition is skewed to polar residues; sequence NITSGADYQQSFDQ. Residues 4613-4624 show a composition bias toward basic and acidic residues; it reads MESKEPELTQEE. The segment covering 4636–4645 has biased composition (polar residues); that stretch reads EQSSFEQAST. Over residues 4730 to 4739 the composition is skewed to polar residues; it reads EQSSFEQAST. Residues 4871–4890 are compositionally biased toward low complexity; it reads EGSSSATSGADIPSSFDISS. The segment covering 5009 to 5023 has biased composition (polar residues); that stretch reads EATSGADTESISETT. Over residues 5390–5407 the composition is skewed to low complexity; the sequence is RRSSGADSRASNDSSASR. Residues 5486–5499 are compositionally biased toward polar residues; the sequence is QISSRTESTNSRVS. Residues 5540 to 5550 are compositionally biased toward pro residues; that stretch reads PPIAISHPTPP. Residues 5560–5572 are compositionally biased toward low complexity; the sequence is RHSSGSSAHSQFG. 2 stretches are compositionally biased toward polar residues: residues 6225–6245 and 6270–6284; these read ASSG…TSGF and KTVS…MASR. 2 stretches are compositionally biased toward basic and acidic residues: residues 6285–6303 and 6376–6422; these read KSSE…ESES and GEGE…EESL. The segment covering 6494-6505 has biased composition (polar residues); that stretch reads LGTSAPTKSIPS. The span at 6590 to 6600 shows a compositional bias: low complexity; it reads SPSVMSSSIMS. Positions 6670–6687 are enriched in polar residues; that stretch reads ETDSSSSVITSRQPSRSP. The segment covering 6735-6747 has biased composition (low complexity); it reads SQVPSRQPSRSPS. Basic and acidic residues-rich tracts occupy residues 6998–7008 and 7045–7069; these read TERKQREESPT and ARSR…HTPE. Residues 7071 to 7086 are compositionally biased toward low complexity; the sequence is SSTAVVTDVPSVSPVT. A compositionally biased stretch (basic and acidic residues) spans 7155-7175; the sequence is TTKKTSDFDFPKETDEVFEKP. Acidic residues predominate over residues 7248-7260; that stretch reads SDEESCSEDDEEY. Low complexity predominate over residues 7313-7331; sequence KTTTSQTPSTSTKPTVTAP. Residues 7599–7609 are compositionally biased toward basic and acidic residues; that stretch reads SVRDDNERNEN. Composition is skewed to low complexity over residues 7777-7788 and 7854-7880; these read SSASRPPSAAGS and AQTG…GSSS. A coiled-coil region spans residues 7895–7915; that stretch reads KKELKDVLIQRKQRLEATEIE. The tract at residues 8510–8562 is disordered; the sequence is SRRRAQETALTSSNKISTGSRSYARRPIRPSSYRNPEATNSMPDRHVARRTAE. Composition is skewed to polar residues over residues 8517 to 8530 and 8541 to 8551; these read TALT…TGSR and SYRNPEATNSM. Over residues 8552–8562 the composition is skewed to basic and acidic residues; it reads PDRHVARRTAE. Positions 8570 to 8661 constitute a PDZ domain; the sequence is RILLTRSYKH…EIEMVIRTYK (92 aa). The region spanning 8714-8835 is the C2 domain; it reads CHGHIQVSLG…SAINTGPRWY (122 aa).

As to expression, expressed in the nervous system.

The protein localises to the synapse. It is found in the cell projection. The protein resides in the axon. Functionally, required for synapse development in the active zone of presynaptic terminals of specific neurons including serotonergic NSM neurons. The active zone is a protein-dense neuronal region within the presynaptic bouton, from which synaptic vesicles send neurotransmitter signals across the synapse. Plays a role in the recruitment and clustering of synaptic vesicles in the active zone of presynaptic terminals in serotonergic NSM neurons, and coordinates the release of synaptic vesicles at presynaptic terminals to regulate neurotransmission at neuromuscular junctions. Regulates synapse number in inhibitory motor neurons and plays a role in spontaneous postsynaptic synaptic vesicle release in muscle cells. In Caenorhabditis elegans, this protein is Protein clarinet.